The sequence spans 285 residues: MLIIRNRQELKEAILKQKKANKTIGFVPTMGFLHEGHMTLVSHARKETDFVVMSVFVNPTQFGPNEDFDAYPRDEAHDAKLAEEGGVDILFVPTVEEIYPTELATKLHVIKRVSVLDGADREGHFDGVVTVLTKLFHLVNPDNAYFGQKDAQQVAVVSGLVEDYFFPVNLRIIPTVREADGLAKSSRNVYLTETERKEAPVIHAALQLGRQLIDSGETDEAKIVQVMTDKINEQTSHEKIAYLALYSYPEFTPVTDWTKGIIIAAAVKYSKARLIDNELINVKRR.

An ATP-binding site is contributed by 30–37; sequence MGFLHEGH. His-37 (proton donor) is an active-site residue. (R)-pantoate is bound at residue Gln-61. Residue Gln-61 participates in beta-alanine binding. Residue 147 to 150 coordinates ATP; that stretch reads GQKD. Residue Gln-153 participates in (R)-pantoate binding. ATP contacts are provided by residues Val-176 and 184–187; that span reads KSSR.

The protein belongs to the pantothenate synthetase family. In terms of assembly, homodimer.

The protein resides in the cytoplasm. It carries out the reaction (R)-pantoate + beta-alanine + ATP = (R)-pantothenate + AMP + diphosphate + H(+). It participates in cofactor biosynthesis; (R)-pantothenate biosynthesis; (R)-pantothenate from (R)-pantoate and beta-alanine: step 1/1. In terms of biological role, catalyzes the condensation of pantoate with beta-alanine in an ATP-dependent reaction via a pantoyl-adenylate intermediate. The polypeptide is Pantothenate synthetase (Listeria innocua serovar 6a (strain ATCC BAA-680 / CLIP 11262)).